Here is a 2494-residue protein sequence, read N- to C-terminus: Polyprotein P1234 (2494 aa).

An Alphavirus-like MT domain is found at 28-257 (EATQVTDNDH…EERILLRSWH (230 aa)). Residues 242 to 261 (GSTIYTEERILLRSWHLPNV) form a nsP1 membrane-binding region. Cys417 carries the S-palmitoyl cysteine; by host lipid modification. The (+)RNA virus helicase ATP-binding domain maps to 674–839 (CVKKGDAGPM…HEICTEVYHK (166 aa)). 719-726 (GVPGSGKS) contributes to the a ribonucleoside 5'-triphosphate binding site. The region spanning 840 to 988 (SISRRCTKTV…LEEWQAEHDA (149 aa)) is the (+)RNA virus helicase C-terminal domain. Positions 1001–1320 (DVFQNKVNVC…VVLNNIYQGS (320 aa)) constitute a Peptidase C9 domain. Residues 1002-1021 (VFQNKVNVCWAKALEPVLAT) are nucleolus localization signal. Catalysis depends on Cys1010, which acts as the For cysteine protease nsP2 activity. The Nuclear export signal signature appears at 1054–1063 (TRFFGVDIDS). The active-site For cysteine protease nsP2 activity is His1079. The Nuclear localization signal signature appears at 1177-1181 (PGKRV). One can recognise a Macro domain in the interval 1328–1486 (APAYRVVRGD…RIKEAITRKE (159 aa)). The ADP-D-ribose site is built by Asp1337, Asn1351, Gly1359, Gly1438, Ile1439, and Tyr1440. Residues Cys1589, Cys1591, Cys1614, and Cys1632 each contribute to the Zn(2+) site. Disordered stretches follow at residues 1667-1711 (LVPR…ASSG) and 1764-1794 (IPSI…GSHT). The span at 1671–1686 (RPAPPVPVPARIPSPP) shows a compositional bias: pro residues. Residues 1687 to 1711 (CTSTNGSTTSIQSLGEDQSASASSG) are compositionally biased toward polar residues. The interval 1798 to 1810 (LITFDSVAEILED) is binding to host G3BP family members. Residues 1858–1874 (PPGVARVISAAEFDEFV) are binding to host FXR family members. The 116-residue stretch at 2252–2367 (AVLETDIASF…GVTSDALMAE (116 aa)) folds into the RdRp catalytic domain.

In terms of assembly, interacts with non-structural protein 3. Interacts with RNA-directed RNA polymerase nsP4. Interacts with protease nsP2. interacts with itself. Interacts with mRNA-capping enzyme nsP1. Interacts with host DDX1. Interacts with host DDX3. Interacts (via C-terminus) with host FXR1; this interaction inhibits the formation of host stress granules on viral mRNAs and the nsp3-FXR1 complexes bind viral RNAs and probably orchestrate the assembly of viral replication complexes. Interacts (via C-terminus) with host FXR2; this interaction inhibits the formation of host stress granules on viral mRNAs and the nsp3-FXR2 complexes bind viral RNAs and probably orchestrate the assembly of viral replication complexes. Interacts (via C-terminus) with host FMR1; this interaction inhibits the formation of host stress granules on viral mRNAs and the nsp3-FMR1 complexes bind viral RNAs and probably orchestrate the assembly of viral replication complexes. Interacts (via C-terminus) with host G3BP1; this interaction inhibits the formation of host stress granules on viral mRNAs and the nsp3-G3BP1 complexes bind viral RNAs and probably orchestrate the assembly of viral replication complexes. Interacts (via C-terminus) with host G3BP2; this interaction inhibits the formation of host stress granules on viral mRNAs and the nsp3-G3BP2 complexes bind viral RNAs and probably orchestrate the assembly of viral replication complexes. As to quaternary structure, interacts with mRNA-capping enzyme nsP1. Interacts with protease nsP2. interacts with itself. In terms of assembly, interacts with RNA-directed RNA polymerase nsP4. Interacts with mRNA-capping enzyme nsP1. Interacts with KPNA1/karyopherin-alpha1; this interaction probably allows the active transport of protease nsP2 into the host nucleus. The cofactor is Mg(2+). Mn(2+) serves as cofactor. Post-translationally, specific enzymatic cleavages in vivo yield mature proteins. The processing of the polyprotein is temporally regulated. In early stages (1.7 hpi), P1234 is first cleaved in trans through its nsP2 protease activity, releasing P123' and nsP4, which associate to form the early replication complex. At the same time, P1234 is also cut at the nsP1/nsP2 site early in infection but with lower efficiency. After replication of the viral minus-strand RNAs (4 hpi), the polyproteins are cut at the nsP1/nsP2 and nsP2/nsP3 sites very efficiently, preventing accumulation of P123' and P1234 and allowing the formation of the late replication complex. NsP3'/nsP4 site is not cleaved anymore and P34 is produced rather than nsP4. Specific enzymatic cleavages in vivo yield mature proteins. The processing of the polyprotein is temporally regulated. In early stages (1.7 hpi), P123 is cleaved at the nsP1/nsP2 site with low efficiency. After replication of the viral minus-strand RNAs (4 hpi), the polyproteins are cut at the nsP1/nsP2 and nsP2/nsP3 sites very efficiently, preventing accumulation of P123 and allowing the formation of the late replication complex. In terms of processing, specific enzymatic cleavages in vivo yield mature proteins. The processing of the polyprotein is temporally regulated. In early stages (1.7 hpi), P123' is cleaved at the nsP1/nsP2 site with low efficiency. After replication of the viral minus-strand RNAs (4 hpi), the polyproteins are cut at the nsP1/nsP2 and nsP2/nsP3 sites very efficiently, preventing accumulation of P123' and allowing the formation of the late replication complex. Post-translationally, palmitoylated by host palmitoyltransferases ZDHHC2 and ZDHHC19. Phosphorylated by host on serines and threonines. In terms of processing, ubiquitinated; targets the protein for rapid degradation via the ubiquitin system. Nsp4 is present in extremely low quantities due to low frequency of translation through the amber stop-codon and the degradation by the ubiquitin pathway.

It localises to the host cytoplasmic vesicle membrane. The protein resides in the host cell membrane. It is found in the host cell projection. The protein localises to the host filopodium. Its subcellular location is the host nucleus. It localises to the host cytoplasm. The catalysed reaction is GTP + S-adenosyl-L-methionine = N(7)-methyl-GTP + S-adenosyl-L-homocysteine. The enzyme catalyses N(7)-methyl-GTP + L-histidyl-[protein] = N(tele)-(N(7)-methylguanosine 5'-phospho)-L-histidyl-[protein] + diphosphate. It carries out the reaction N(tele)-(N(7)-methylguanosine 5'-phospho)-L-histidyl-[protein] + a 5'-end diphospho-(purine-ribonucleoside) in mRNA + H(+) = a 5'-end (N(7)-methyl 5'-triphosphoguanosine)-(purine-ribonucleoside) in mRNA + L-histidyl-[protein]. It catalyses the reaction a 5'-end triphospho-ribonucleoside in mRNA + H2O = a 5'-end diphospho-ribonucleoside in mRNA + phosphate + H(+). The catalysed reaction is a ribonucleoside 5'-triphosphate + H2O = a ribonucleoside 5'-diphosphate + phosphate + H(+). The enzyme catalyses ATP + H2O = ADP + phosphate + H(+). It carries out the reaction RNA(n) + a ribonucleoside 5'-triphosphate = RNA(n+1) + diphosphate. It catalyses the reaction 4-O-(ADP-D-ribosyl)-L-aspartyl-[protein] + H2O = L-aspartyl-[protein] + ADP-D-ribose + H(+). The catalysed reaction is 5-O-(ADP-D-ribosyl)-L-glutamyl-[protein] + H2O = L-glutamyl-[protein] + ADP-D-ribose + H(+). The enzyme catalyses RNA(n) + ATP = RNA(n)-3'-adenine ribonucleotide + diphosphate. It carries out the reaction ADP-alpha-D-ribose 1''-phosphate + H2O = ADP-D-ribose + phosphate. With respect to regulation, inhibited by sinefungin. Inactive precursor of the viral replicase, which is activated by cleavages carried out by the viral protease nsP2. Functionally, the early replication complex formed by the polyprotein P123 and nsP4 synthesizes the minus-strand RNAs (antigenome). Polyprotein P123 is a short-lived polyprotein that accumulates during early stage of infection. As soon P123 is cleaved into mature proteins, the plus-strand RNAs synthesis begins. Its function is as follows. The early replication complex formed by the polyprotein P123' and nsP4 synthesizes minus-strand RNAs (antigenome). Polyprotein P123' is a short-lived polyprotein that accumulates during early stage of infection. As soon P123' is cleaved into mature proteins, the plus-strand RNAs synthesis begins. In terms of biological role, cytoplasmic capping enzyme that catalyzes two virus-specific reactions: methyltransferase and nsP1 guanylyltransferase. mRNA-capping is necessary since all viral RNAs are synthesized in the cytoplasm, and host capping enzymes are restricted to the nucleus. The enzymatic reaction involves a covalent link between 7-methyl-GMP and nsP1, whereas eukaryotic capping enzymes form a covalent complex only with GMP. NsP1 capping consists in the following reactions: GTP is first methylated into 7-methyl-GMP and then is covalently linked to nsP1 to form the m7GMp-nsP1 complex from which 7-methyl-GMP complex is transferred to the mRNA to create the cap structure. NsP1 is also needed for the initiation of the minus-strand RNAs synthesis. Probably serves as a membrane anchor for the replication complex composed of nsP1-nsP4. Nsp1 is needed for the initiation of the minus-strand RNAs synthesis. Palmitoylated nsP1 is remodeling host cell cytoskeleton, and induces filopodium-like structure formation at the surface of the host cell. Multifunctional protein whose N-terminus is part of the RNA polymerase complex and displays NTPase, RNA triphosphatase and helicase activities. NTPase and RNA triphosphatase are involved in viral RNA capping and helicase keeps a check on the dsRNA replication intermediates. The C-terminus harbors a protease that specifically cleaves the polyproteins and releases the mature proteins. Required for the shutoff of minus-strand RNAs synthesis. Inhibits host translation to ensure maximal viral gene expression and evade host immune response. Functionally, seems to be essential for minus-strand RNAs and subgenomic 26S mRNAs synthesis. Displays mono-ADP-ribosylhydrolase activity. ADP-ribosylation is a post-translational modification that controls various processes of the host cell and the virus probably needs to revert it for optimal viral replication. Binds proteins of FXR and G3BP families and sequesters them into the viral RNA replication complexes thereby inhibiting the formation of host stress granules on viral mRNAs. The nsp3-FXR and nsp3-G3BP complexes bind viral RNAs and probably orchestrate the assembly of viral replication complexes, thanks to the ability of G3BP and FXR family members to self-assemble and bind DNA. Its function is as follows. Seems to be essential for minus-strand RNAs and subgenomic 26S mRNAs synthesis. Displays mono-ADP-ribosylhydrolase activity. ADP-ribosylation is a post-translational modification that controls various processes of the host cell and the virus probably needs to revert it for optimal viral replication. Binds proteins of FXR family and sequesters them into the viral RNA replication complexes thereby inhibiting the formation of host stress granules on viral mRNAs. The nsp3'-FXR complexes bind viral RNAs and probably orchestrate the assembly of viral replication complexes, thanks to the ability of FXR family members to self-assemble and bind DNA. In terms of biological role, RNA dependent RNA polymerase. Replicates genomic and antigenomic RNA by recognizing replications specific signals. The early replication complex formed by the polyprotein P123 and nsP4 synthesizes minus-strand RNAs. The late replication complex composed of fully processed nsP1-nsP4 is responsible for the production of genomic and subgenomic plus-strand RNAs. In Aedes (Human), this protein is Polyprotein P1234.